The sequence spans 4047 residues: Cubilin homolog (4047 aa).

The N-terminal stretch at 1-22 is a signal peptide; that stretch reads MIPNLQLFLSLILFGLLNHVSS. N-linked (GlcNAc...) asparagine glycans are attached at residues Asn56, Asn92, and Asn127. An EGF-like 1 domain is found at 168 to 205; it reads AINACDPNKCSNGGTCIPSFGAKFTCLCPPHFTGTTCE. 26 disulfides stabilise this stretch: Cys172–Cys183, Cys177–Cys193, Cys195–Cys204, Cys211–Cys227, Cys221–Cys236, Cys238–Cys247, Cys310–Cys321, Cys315–Cys330, Cys333–Cys344, Cys350–Cys363, Cys357–Cys372, Cys375–Cys386, Cys392–Cys403, Cys397–Cys418, Cys420–Cys434, Cys442–Cys453, Cys447–Cys463, Cys465–Cys474, Cys480–Cys491, Cys485–Cys500, Cys502–Cys511, Cys518–Cys544, Cys577–Cys601, Cys645–Cys667, Cys696–Cys719, and Cys769–Cys801. In terms of domain architecture, EGF-like 2; calcium-binding spans 207 to 248; the sequence is DIDECSVYNGTTAGCQNNGTCINNRGGFECQCQSGYHGSLCQ. 2 N-linked (GlcNAc...) asparagine glycosylation sites follow: Asn215 and Asn224. The 40-residue stretch at 306 to 345 folds into the EGF-like 3; calcium-binding domain; that stretch reads DVNECESNPCHPGVDCINLPGSFVCSGCPKGYKTDGNVCI. An EGF-like 4; calcium-binding domain is found at 346–387; the sequence is DVNECEGEIRVCSPLSKCHNTLGSYYCDSCPTGYSGDGGNCV. 3 EGF-like domains span residues 388 to 435, 438 to 475, and 476 to 512; these read KDDS…EGCV, ASNV…KFCE, and KTSP…RACE. CUB domains are found at residues 518 to 641, 645 to 763, 769 to 934, 934 to 1061, 1065 to 1182, 1188 to 1300, 1304 to 1427, 1428 to 1558, 1560 to 1680, and 1691 to 1841; these read CGSH…WETV, CGYR…YKFT, CGAE…YEML, LCEK…YKTS, CGGV…FEAV, CDFT…YETI, CGGR…FTTL, CNGI…WNTL, CSRD…VEFV, and CGQV…MIPK. Residues Asn528, Asn537, and Asn583 are each glycosylated (N-linked (GlcNAc...) asparagine). Residues Asn775, Asn806, and Asn811 are each glycosylated (N-linked (GlcNAc...) asparagine). The cysteines at positions 877 and 896 are disulfide-linked. Asn942 carries N-linked (GlcNAc...) asparagine glycosylation. 3 disulfide bridges follow: Cys1065–Cys1091, Cys1120–Cys1145, and Cys1188–Cys1211. Asn1133 carries N-linked (GlcNAc...) asparagine glycosylation. N-linked (GlcNAc...) asparagine glycosylation is present at Asn1229. Cys1234 and Cys1262 form a disulfide bridge. An N-linked (GlcNAc...) asparagine glycan is attached at Asn1294. A disulfide bridge links Cys1304 with Cys1330. An N-linked (GlcNAc...) asparagine glycan is attached at Asn1353. 3 cysteine pairs are disulfide-bonded: Cys1428-Cys1455, Cys1488-Cys1522, and Cys1560-Cys1586. The N-linked (GlcNAc...) asparagine glycan is linked to Asn1513. N-linked (GlcNAc...) asparagine glycans are attached at residues Asn1613, Asn1631, Asn1648, and Asn1674. A disulfide bridge connects residues Cys1614 and Cys1641. A disulfide bridge links Cys1691 with Cys1720. N-linked (GlcNAc...) asparagine glycans are attached at residues Asn1762, Asn1782, Asn1866, and Asn1890. Cys1955 and Cys1979 form a disulfide bridge. The CUB 11 domain occupies 1955–2083; sequence CGGEVRHSQG…PLFKARYEKV (129 aa). Residues Asn2005, Asn2016, and Asn2017 are each glycosylated (N-linked (GlcNAc...) asparagine). A disulfide bridge connects residues Cys2006 and Cys2027. The tract at residues 2052–2071 is disordered; the sequence is ASDGNDDDDDTPDIDQQDSN. Residues 2055–2067 are compositionally biased toward acidic residues; the sequence is GNDDDDDTPDIDQ. Residue Asn2193 is glycosylated (N-linked (GlcNAc...) asparagine). Cystine bridges form between Cys2207-Cys2238 and Cys2265-Cys2295. CUB domains follow at residues 2207-2334, 2335-2463, 2467-2588, 2590-2717, and 2721-2859; these read CGGD…YRLT, CNSF…IKEQ, CPSG…YGIA, CGGT…VTMS, and CGGR…YMAI. Asn2301 and Asn2305 each carry an N-linked (GlcNAc...) asparagine glycan. 2 disulfide bridges follow: Cys2335/Cys2368 and Cys2395/Cys2424. Asn2434 carries an N-linked (GlcNAc...) asparagine glycan. Cystine bridges form between Cys2467-Cys2498 and Cys2590-Cys2619. Asn2599, Asn2645, Asn2657, and Asn2692 each carry an N-linked (GlcNAc...) asparagine glycan. Cys2646 and Cys2668 are joined by a disulfide. Cystine bridges form between Cys2721/Cys2747 and Cys2786/Cys2809. 4 N-linked (GlcNAc...) asparagine glycosylation sites follow: Asn2811, Asn2845, Asn2875, and Asn2988. 4 disulfides stabilise this stretch: Cys2996–Cys3025, Cys3052–Cys3074, Cys3127–Cys3154, and Cys3181–Cys3217. CUB domains follow at residues 2996–3121, 3127–3254, 3255–3385, 3387–3508, 3515–3641, 3645–3783, and 3786–3900; these read CGGV…YEFL, CGYH…WEAE, CGAI…YSIN, CGDN…VISS, CGGK…YSIV, CGGW…YNIL, and CNRT…YYTV. A glycan (N-linked (GlcNAc...) asparagine) is linked at Asn3235. 3 cysteine pairs are disulfide-bonded: Cys3255/Cys3281, Cys3315/Cys3335, and Cys3387/Cys3418. 2 N-linked (GlcNAc...) asparagine glycosylation sites follow: Asn3421 and Asn3461. Cystine bridges form between Cys3445-Cys3468 and Cys3515-Cys3544. An N-linked (GlcNAc...) asparagine glycan is attached at Asn3635. 2 disulfides stabilise this stretch: Cys3645-Cys3680 and Cys3708-Cys3742. N-linked (GlcNAc...) asparagine glycans are attached at residues Asn3770, Asn3787, Asn3812, Asn3858, and Asn3930. 2 cysteine pairs are disulfide-bonded: Cys3786–Cys3815 and Cys3845–Cys3863.

It is found in the secreted. In terms of biological role, cotransporter which plays a role in lipoprotein, vitamin and iron metabolism, by facilitating their uptake. The polypeptide is Cubilin homolog (Caenorhabditis elegans).